We begin with the raw amino-acid sequence, 359 residues long: MSYSIYKSTVNIPLSHGVVHSFCHNMNCNFMHIFKFVLDFNMKNVTEVTLFVLKGFTDNLELQTIFFFLFLAIYLFTLMGNLGLILVVIRDSQLHKPMYYFLSMLSSVDACYSSVITPNMLVDFTTKNKVISFLGCVAQVFLACSFGTTECFLLAAMAYDRYVAIYNPLLYSVSMSPRVYMPLINASYVAGILHATIHTVATFSLSFCGANEIRRVFCDIPPLLAISYSDTHTNQLLLFYFVGSIELVTILIVLISYGLILLAILKMYSAEGRRKVFSTCGAHLTGVSIYYGTILFMYVRPSSSYASDHDMIVSIFYTIVIPLLNPVIYSLRNKDVKDSMKKMFGKNQVINKVYFHTKK.

Over Met-1–Thr-64 the chain is Extracellular. N-linked (GlcNAc...) asparagine glycosylation is present at Asn-44. A helical membrane pass occupies residues Ile-65–Ile-85. At Leu-86–Gln-93 the chain is on the cytoplasmic side. Residues Leu-94–Ser-114 traverse the membrane as a helical segment. At Val-115–Ala-138 the chain is on the extracellular side. The helical transmembrane segment at Gln-139–Tyr-159 threads the bilayer. The Cytoplasmic segment spans residues Asp-160–Arg-178. A helical transmembrane segment spans residues Val-179 to Thr-199. Over Val-200–Gln-235 the chain is Extracellular. Residues Leu-236–Ser-256 traverse the membrane as a helical segment. Residues Tyr-257–Val-276 are Cytoplasmic-facing. The chain crosses the membrane as a helical span at residues Phe-277 to Met-297. The Extracellular portion of the chain corresponds to Tyr-298–Asp-310. A helical transmembrane segment spans residues Met-311–Leu-331. At Arg-332–Lys-359 the chain is on the cytoplasmic side.

Belongs to the G-protein coupled receptor 1 family.

The protein resides in the cell membrane. In terms of biological role, odorant receptor. The polypeptide is Olfactory receptor 5T2 (OR5T2) (Homo sapiens (Human)).